The primary structure comprises 144 residues: Transcriptional regulator SlyA (144 aa).

The 134-residue stretch at 2 to 135 folds into the HTH marR-type domain; sequence ESPLGSDLAR…LITLIAKLEH (134 aa). Positions 49 to 72 form a DNA-binding region, H-T-H motif; that stretch reads QIQLAKAIGIEQPSLVRTLDQLEE.

This sequence belongs to the SlyA family. Homodimer.

In terms of biological role, transcription regulator that can specifically activate or repress expression of target genes. This is Transcriptional regulator SlyA from Escherichia coli (strain 55989 / EAEC).